Here is a 145-residue protein sequence, read N- to C-terminus: Putative pre-16S rRNA nuclease (145 aa).

This sequence belongs to the YqgF nuclease family.

It is found in the cytoplasm. Could be a nuclease involved in processing of the 5'-end of pre-16S rRNA. In Pseudomonas fluorescens (strain SBW25), this protein is Putative pre-16S rRNA nuclease.